The sequence spans 554 residues: Arginine--tRNA ligase (554 aa).

The 'HIGH' region motif lies at 132–142 (ANPTGPIHLGG).

The protein belongs to the class-I aminoacyl-tRNA synthetase family. As to quaternary structure, monomer.

The protein localises to the cytoplasm. It carries out the reaction tRNA(Arg) + L-arginine + ATP = L-arginyl-tRNA(Arg) + AMP + diphosphate. This Kineococcus radiotolerans (strain ATCC BAA-149 / DSM 14245 / SRS30216) protein is Arginine--tRNA ligase.